The primary structure comprises 1019 residues: Probable LRR receptor-like serine/threonine-protein kinase At1g29720 (1019 aa).

The first 19 residues, 1–19, serve as a signal peptide directing secretion; the sequence is MSIILWSFFLFFTIILSSL. Over 20–615 the chain is Extracellular; sequence TNITTLASFS…EKTKHHIKYP (596 aa). N-linked (GlcNAc...) asparagine glycans are attached at residues Asn-21, Asn-79, and Asn-90. 13 LRR repeats span residues 93-117, 118-141, 143-165, 166-189, 190-212, 214-236, 237-261, 263-283, 284-307, 308-330, 332-351, 352-374, and 375-398; these read ICRI…LTKL, PYLK…WAKM, YLTS…LQNF, KNLT…LGNL, TSLT…TLAR, VNLE…YIGN, WTRL…VVRL, NLLE…NLSS, KGLK…IWNL, TDLK…VQNP, KNIY…GGLL, NSQS…QKGS, and TINT…AVPA. N-linked (GlcNAc...) asparagine glycosylation is found at Asn-153, Asn-167, and Asn-188. N-linked (GlcNAc...) asparagine glycosylation is found at Asn-225 and Asn-236. N-linked (GlcNAc...) asparagine glycans are attached at residues Asn-280 and Asn-306. 4 N-linked (GlcNAc...) asparagine glycosylation sites follow: Asn-363, Asn-387, Asn-469, and Asn-558. The chain crosses the membrane as a helical span at residues 616–636; sequence LILGASGALVTIVLLAVGIYA. Over 637-1019 the chain is Cytoplasmic; sequence RGIYRRDNNR…STVENSSSSL (383 aa). Residues 673 to 946 enclose the Protein kinase domain; it reads FDQANKLGEG…EAVKMLEGEI (274 aa). ATP is bound by residues 679–687 and Lys-701; that span reads LGEGGFGSV. At Tyr-746 the chain carries Phosphotyrosine. Asp-797 functions as the Proton acceptor in the catalytic mechanism. Ser-830 is subject to Phosphoserine. Phosphothreonine occurs at positions 831 and 836. Tyr-844 carries the post-translational modification Phosphotyrosine.

This sequence belongs to the protein kinase superfamily. Ser/Thr protein kinase family.

The protein resides in the cell membrane. It catalyses the reaction L-seryl-[protein] + ATP = O-phospho-L-seryl-[protein] + ADP + H(+). It carries out the reaction L-threonyl-[protein] + ATP = O-phospho-L-threonyl-[protein] + ADP + H(+). This Arabidopsis thaliana (Mouse-ear cress) protein is Probable LRR receptor-like serine/threonine-protein kinase At1g29720 (RFK1).